The sequence spans 214 residues: MVIDKSIPKATAKRLSLYYRIFKRFHADQVEKASSKQIADAMGIDSATVRRDFSYFGELGRRGFGYDVTKLMNFFADLLNDHSTTNVILVGCGNIGRALLHYRFHDRNKMQIAMGFDTDDNALVGTKTADNIPVHGISSVKERIANTDIETAILTVPSIHAQEVTDQLIEAGIKGILSFAPVHLQVPKGVIVQSVDLTSELQTLLYFMNQNHLD.

The segment at residues leucine 17 to phenylalanine 56 is a DNA-binding region (H-T-H motif). Glycine 91–glycine 96 contacts NAD(+).

Belongs to the transcriptional regulatory Rex family. Homodimer.

The protein localises to the cytoplasm. Its function is as follows. Modulates transcription in response to changes in cellular NADH/NAD(+) redox state. The sequence is that of Redox-sensing transcriptional repressor Rex from Streptococcus pyogenes serotype M1.